Here is an 803-residue protein sequence, read N- to C-terminus: Phenylalanine--tRNA ligase beta subunit (803 aa).

Positions 40–150 (SNKFYGIVIA…IDAPIGCNFY (111 aa)) constitute a tRNA-binding domain. Positions 405–480 (PKIKIIKLHR…RIYGYNHIPK (76 aa)) constitute a B5 domain. Asp458 and Glu468 together coordinate Mg(2+). The 94-residue stretch at 710–803 (SKFPKNYRDI…LKKHFNAIFR (94 aa)) folds into the FDX-ACB domain.

The protein belongs to the phenylalanyl-tRNA synthetase beta subunit family. Type 1 subfamily. As to quaternary structure, tetramer of two alpha and two beta subunits. Requires Mg(2+) as cofactor.

The protein localises to the cytoplasm. It carries out the reaction tRNA(Phe) + L-phenylalanine + ATP = L-phenylalanyl-tRNA(Phe) + AMP + diphosphate + H(+). The protein is Phenylalanine--tRNA ligase beta subunit of Blochmanniella floridana.